A 353-amino-acid chain; its full sequence is DNA-directed RNA polymerase subunit alpha (353 aa).

Residues 1-234 (MVREKVTVST…DLFIPFLHTE (234 aa)) are alpha N-terminal domain (alpha-NTD). The tract at residues 267–353 (KRALKSIFID…LAQLIDSKSG (87 aa)) is alpha C-terminal domain (alpha-CTD).

This sequence belongs to the RNA polymerase alpha chain family. In terms of assembly, in plastids the minimal PEP RNA polymerase catalytic core is composed of four subunits: alpha, beta, beta', and beta''. When a (nuclear-encoded) sigma factor is associated with the core the holoenzyme is formed, which can initiate transcription.

It is found in the plastid. The protein localises to the chloroplast. The catalysed reaction is RNA(n) + a ribonucleoside 5'-triphosphate = RNA(n+1) + diphosphate. Its function is as follows. DNA-dependent RNA polymerase catalyzes the transcription of DNA into RNA using the four ribonucleoside triphosphates as substrates. This Daucus carota (Wild carrot) protein is DNA-directed RNA polymerase subunit alpha.